The chain runs to 303 residues: Uridine diphosphate glucose pyrophosphatase NUDT22 (303 aa).

Substrate-binding residues include Phe56, Tyr87, Arg139, Ala144, Asp151, His156, and Glu158. The 168-residue stretch at Ala118–Val285 folds into the Nudix hydrolase domain. The tract at residues Gly148–Pro168 is disordered. Residues Gly175–Leu196 carry the Nudix box motif. Mg(2+) contacts are provided by Glu189 and Glu193. Residue Ser274 coordinates substrate.

Belongs to the Nudix hydrolase family. It depends on Mg(2+) as a cofactor.

The catalysed reaction is UDP-sugar + H2O = UMP + alpha-D-aldose 1-phosphate.. In terms of biological role, hydrolyzes UDP-glucose to glucose 1-phosphate and UMP and UDP-galactose to galactose 1-phosphate and UMP. Preferred substrate is UDP-glucose. The sequence is that of Uridine diphosphate glucose pyrophosphatase NUDT22 (NUDT22) from Homo sapiens (Human).